The sequence spans 476 residues: MSIEKNNNIGYITQVIGPVIDAVFSSGVLPKIYNALEVEGKDGPIICEVQQLLGDNRVRAISMSATDGLQRGVKVYDTKAPISVPVGKTTLGRIFNVLGQPIDNLGDTPSNETLPIHRSAPAFTDLETRPAIFETGIKVVDLLAPYRRGGKIGLFGGAGVGKTVLIMELINNIAKAHGGVSVFGGVGERTREGNDLYMEMKESGVINEKNLLESKVALVYGQMNEPPGARMRVGLTALTMAEYFRDINKQDVLLFIDNIFRFVQAGSEVSALLGRMPSAVGYQPTLGTEMGALQERITSTNQGSITSIQAVYVPADDLTDPAPATTFAHLDATTVLSRGLAAKGIYPAVDPLDSTSTMLQPLIVGDEHYKTAQLVKETLQRYKELQDIIAILGIDELSEEDRLVVDRARKIERFLSQPFFVAEVFTGSPGKYVDLESTIKGFNMILGGELDDLPEQAFYLVGDINEAISKAKTFNN.

156–163 contributes to the ATP binding site; the sequence is GGAGVGKT.

This sequence belongs to the ATPase alpha/beta chains family. As to quaternary structure, F-type ATPases have 2 components, CF(1) - the catalytic core - and CF(0) - the membrane proton channel. CF(1) has five subunits: alpha(3), beta(3), gamma(1), delta(1), epsilon(1). CF(0) has four main subunits: a(1), b(1), b'(1) and c(9-12).

The protein resides in the plastid. The protein localises to the chloroplast thylakoid membrane. The catalysed reaction is ATP + H2O + 4 H(+)(in) = ADP + phosphate + 5 H(+)(out). Functionally, produces ATP from ADP in the presence of a proton gradient across the membrane. The catalytic sites are hosted primarily by the beta subunits. This Fucus vesiculosus (Bladder wrack) protein is ATP synthase subunit beta, chloroplastic.